Reading from the N-terminus, the 218-residue chain is Cell division protein SepF (218 aa).

Positions 24–115 are disordered; the sequence is EDVTASTDNV…IANRREQYQQ (92 aa). The segment covering 28 to 43 has biased composition (polar residues); the sequence is ASTDNVIPRSQQSVRA. Positions 47 to 63 are enriched in basic and acidic residues; sequence PKQEPRNNHVQQDHQAR.

It belongs to the SepF family. Homodimer. Interacts with FtsZ.

The protein resides in the cytoplasm. Cell division protein that is part of the divisome complex and is recruited early to the Z-ring. Probably stimulates Z-ring formation, perhaps through the cross-linking of FtsZ protofilaments. Its function overlaps with FtsA. The protein is Cell division protein SepF of Streptococcus pyogenes serotype M4 (strain MGAS10750).